We begin with the raw amino-acid sequence, 111 residues long: MNSRLVLLLAVSVALVSAIAVGNRSSHLKKSKECSSDGHTERCEYTGDLTVKTDSTCNHSTYIMTKVTPPNESPSNGVAHCRTAPCNSEDYADVDCLVAFGADNIAAIEKQ.

Positions 1-18 (MNSRLVLLLAVSVALVSA) are cleaved as a signal peptide. N-linked (GlcNAc...) asparagine glycosylation is found at Asn23 and Asn58.

Belongs to the UPF0375 family.

Its subcellular location is the secreted. This chain is UPF0375 protein ule-4, found in Caenorhabditis elegans.